The sequence spans 315 residues: Outer membrane protease IcsP (315 aa).

The signal sequence occupies residues 1–20 (MKLKFFVLALCVPAIFTTHA). Active-site residues include aspartate 103, aspartate 105, aspartate 230, and histidine 232.

This sequence belongs to the peptidase A26 family.

It localises to the cell outer membrane. Functionally, protease responsible for the cleavage of IcsA between 'Arg-758' and 'Arg-759', removing the entire alpha domain from IscA localized on the bacterial surface. This proteolytic activity contributes to the maintenance of a tight polar cap of IcsA, which is important to Shigella actin-based motility. This Shigella flexneri protein is Outer membrane protease IcsP (icsP).